Here is a 67-residue protein sequence, read N- to C-terminus: Small ribosomal subunit protein eS27 (67 aa).

Zn(2+)-binding residues include C22, C25, C41, and C44. The C4-type zinc-finger motif lies at 22–44 (CPDCGNEQVTFSHAAMVVRCLVC).

It belongs to the eukaryotic ribosomal protein eS27 family. As to quaternary structure, part of the 30S ribosomal subunit. The cofactor is Zn(2+).

In Pyrobaculum neutrophilum (strain DSM 2338 / JCM 9278 / NBRC 100436 / V24Sta) (Thermoproteus neutrophilus), this protein is Small ribosomal subunit protein eS27.